The following is a 559-amino-acid chain: Dihydroxy-acid dehydratase (559 aa).

A [2Fe-2S] cluster-binding site is contributed by Cys-52. Asp-84 contacts Mg(2+). Cys-125 is a [2Fe-2S] cluster binding site. Positions 126 and 127 each coordinate Mg(2+). N6-carboxylysine is present on Lys-127. Cys-197 contacts [2Fe-2S] cluster. Glu-447 contributes to the Mg(2+) binding site. Residue Ser-473 is the Proton acceptor of the active site.

This sequence belongs to the IlvD/Edd family. Homodimer. Requires [2Fe-2S] cluster as cofactor. Mg(2+) serves as cofactor.

It carries out the reaction (2R)-2,3-dihydroxy-3-methylbutanoate = 3-methyl-2-oxobutanoate + H2O. The catalysed reaction is (2R,3R)-2,3-dihydroxy-3-methylpentanoate = (S)-3-methyl-2-oxopentanoate + H2O. It functions in the pathway amino-acid biosynthesis; L-isoleucine biosynthesis; L-isoleucine from 2-oxobutanoate: step 3/4. It participates in amino-acid biosynthesis; L-valine biosynthesis; L-valine from pyruvate: step 3/4. In terms of biological role, functions in the biosynthesis of branched-chain amino acids. Catalyzes the dehydration of (2R,3R)-2,3-dihydroxy-3-methylpentanoate (2,3-dihydroxy-3-methylvalerate) into 2-oxo-3-methylpentanoate (2-oxo-3-methylvalerate) and of (2R)-2,3-dihydroxy-3-methylbutanoate (2,3-dihydroxyisovalerate) into 2-oxo-3-methylbutanoate (2-oxoisovalerate), the penultimate precursor to L-isoleucine and L-valine, respectively. In Roseiflexus sp. (strain RS-1), this protein is Dihydroxy-acid dehydratase.